Here is a 376-residue protein sequence, read N- to C-terminus: N6-methyladenosine RNA methyltransferase MTA1 (376 aa).

A disordered region spans residues 53 to 78 (TRRLISSPPPETPFVTPEPKNGPSPL).

This sequence belongs to the MT-A70-like family.

It carries out the reaction an adenosine in mRNA + S-adenosyl-L-methionine = an N(6)-methyladenosine in mRNA + S-adenosyl-L-homocysteine + H(+). Its function is as follows. N6-methyladenosine RNA methyltransferase that plays a crucial role in fungal phenotypic traits, virulence, and stress tolerance. Mediates the methylation of mRNAs to produce N6-methyladenosine (m6A)-containing mRNAs. M6A is a modification present at internal sites of mRNAs and some non-coding RNAs and plays a role in mRNA stability and processing. Required for appressorium turgor pressure and regulates autophagosome formation during appressorium formation stage. Specifically, mediates the stability of ATG8 mRNA in a m6A-dependent manner via modification of the m6A site A982 located in 3'UTR region. The chain is N6-methyladenosine RNA methyltransferase MTA1 from Pyricularia oryzae (strain 70-15 / ATCC MYA-4617 / FGSC 8958) (Rice blast fungus).